The chain runs to 469 residues: Cysteine protease ATG4 (469 aa).

The disordered stretch occupies residues 48-99 (KNIKADDHHPQTPPSVLKAETETQEAHDTAQPPNPPTNAPDTPPDSISSSFS). Basic and acidic residues predominate over residues 66-75 (AETETQEAHD). Residues 79–90 (PPNPPTNAPDTP) are compositionally biased toward pro residues. Catalysis depends on cysteine 172, which acts as the Nucleophile. Catalysis depends on residues aspartate 362 and histidine 364. The tract at residues 443 to 469 (GSSEGRESAIDEVETLSDDDTDTIHEA) is disordered. Positions 452 to 463 (IDEVETLSDDDT) are enriched in acidic residues.

This sequence belongs to the peptidase C54 family. In terms of assembly, interacts with ATG8.

Its subcellular location is the cytoplasm. It is found in the nucleus. The protein resides in the preautophagosomal structure. The enzyme catalyses [protein]-C-terminal L-amino acid-glycyl-phosphatidylethanolamide + H2O = [protein]-C-terminal L-amino acid-glycine + a 1,2-diacyl-sn-glycero-3-phosphoethanolamine. Functionally, cysteine protease that plays a key role in cytoplasm to vacuole transport (Cvt) and autophagy by mediating both proteolytic activation and delipidation of ATG8. Required for selective autophagic degradation of the nucleus (nucleophagy) as well as for mitophagy which contributes to regulate mitochondrial quantity and quality by eliminating the mitochondria to a basal level to fulfill cellular energy requirements and preventing excess ROS production. The protease activity is required for proteolytic activation of ATG8: cleaves the C-terminal amino acid of ATG8 to reveal a C-terminal glycine. ATG8 ubiquitin-like activity requires the exposure of the glycine at the C-terminus for its conjugation to phosphatidylethanolamine (PE) and its insertion to membranes, which is necessary for autophagy. The ATG8-PE conjugate mediates tethering between adjacent membranes and stimulates membrane hemifusion, leading to expansion of the autophagosomal membrane during autophagy. In addition to the protease activity, also catalyzes deconjugation of PE-conjugated forms of ATG8 during macroautophagy: ATG8 delipidation is required to release the protein from membranes, which facilitates multiple events during macroautophagy, and especially for efficient autophagosome biogenesis, the assembly of ATG9-containing tubulovesicular clusters into phagophores/autophagosomes, and for the disassembly of PAS-associated ATG components. ATG8 delipidation by ATG4 also recycles ATG8-PE generated on inappropriate membranes to maintain a reservoir of unlipidated ATG8 that is required for autophagosome formation at the PAS. Autophagy is required for proper vegetative growth, asexual/sexual reproduction, and full virulence. Autophagy is particularly involved in the biosynthesis of deoxynivalenol (DON), an important virulence determinant. The chain is Cysteine protease ATG4 from Gibberella zeae (strain ATCC MYA-4620 / CBS 123657 / FGSC 9075 / NRRL 31084 / PH-1) (Wheat head blight fungus).